The primary structure comprises 307 residues: S-methyl-5'-thioadenosine phosphorylase (307 aa).

Residues threonine 20, 62–63 (RH), and 95–96 (SA) contribute to the phosphate site. Methionine 197 is a substrate binding site. Residue serine 198 participates in phosphate binding. Substrate is bound at residue 221–223 (DYD).

Belongs to the PNP/MTAP phosphorylase family. MTAP subfamily. As to quaternary structure, homotrimer.

The protein resides in the cytoplasm. Its subcellular location is the nucleus. It carries out the reaction S-methyl-5'-thioadenosine + phosphate = 5-(methylsulfanyl)-alpha-D-ribose 1-phosphate + adenine. It functions in the pathway amino-acid biosynthesis; L-methionine biosynthesis via salvage pathway; S-methyl-5-thio-alpha-D-ribose 1-phosphate from S-methyl-5'-thioadenosine (phosphorylase route): step 1/1. Functionally, catalyzes the reversible phosphorylation of S-methyl-5'-thioadenosine (MTA) to adenine and 5-methylthioribose-1-phosphate. Involved in the breakdown of MTA, a major by-product of polyamine biosynthesis. Responsible for the first step in the methionine salvage pathway after MTA has been generated from S-adenosylmethionine. Has broad substrate specificity with 6-aminopurine nucleosides as preferred substrates. This chain is S-methyl-5'-thioadenosine phosphorylase, found in Fusarium vanettenii (strain ATCC MYA-4622 / CBS 123669 / FGSC 9596 / NRRL 45880 / 77-13-4) (Fusarium solani subsp. pisi).